Reading from the N-terminus, the 714-residue chain is Fumarate reductase flavoprotein subunit (714 aa).

FAD contacts are provided by residues 13-16 (GGLA), 42-44 (SHS), and 49-50 (GG). Position 43 is a tele-8alpha-FAD histidine (His43). Active-site residues include His257 and Arg273. FAD contacts are provided by residues Glu420 and 436–437 (SV).

Belongs to the FAD-dependent oxidoreductase 2 family. FRD/SDH subfamily. As to quaternary structure, part of an enzyme complex containing three subunits: a flavoprotein (frdA), an iron-sulfur protein (frdB), and diheme cytochrome b (frdC). The cofactor is FAD.

Its subcellular location is the cell inner membrane. It catalyses the reaction a quinone + succinate = fumarate + a quinol. The fumarate reductase enzyme complex is required for fumarate respiration. This Helicobacter pylori (strain ATCC 700392 / 26695) (Campylobacter pylori) protein is Fumarate reductase flavoprotein subunit (frdA).